Here is a 261-residue protein sequence, read N- to C-terminus: Carnitinyl-CoA dehydratase (261 aa).

Glu111 acts as the Nucleophile in catalysis. The active-site Proton acceptor is Glu131.

The protein belongs to the enoyl-CoA hydratase/isomerase family.

It carries out the reaction (R)-carnitinyl-CoA = crotonobetainyl-CoA + H2O. The protein operates within amine and polyamine metabolism; carnitine metabolism. Catalyzes the reversible dehydration of L-carnitinyl-CoA to crotonobetainyl-CoA. The polypeptide is Carnitinyl-CoA dehydratase (Escherichia coli O157:H7).